The primary structure comprises 150 residues: Large ribosomal subunit protein bL9 (150 aa).

This sequence belongs to the bacterial ribosomal protein bL9 family.

Binds to the 23S rRNA. The chain is Large ribosomal subunit protein bL9 from Yersinia pseudotuberculosis serotype I (strain IP32953).